The primary structure comprises 587 residues: Zinc finger protein 496 (587 aa).

A disordered region spans residues Met1–Ser40. The span at Ala11 to Lys20 shows a compositional bias: basic and acidic residues. Lys13 participates in a covalent cross-link: Glycyl lysine isopeptide (Lys-Gly) (interchain with G-Cter in SUMO2). The 83-residue stretch at Arg42–Pro124 folds into the SCAN box domain. Residue Ser185 is modified to Phosphoserine. Positions Ser221–Val291 constitute a KRAB domain. Positions Pro260–Glu282 are disordered. Ser299 bears the Phosphoserine mark. The disordered stretch occupies residues Ser358–Val399. The span at His389–Val399 shows a compositional bias: polar residues. A Glycyl lysine isopeptide (Lys-Gly) (interchain with G-Cter in SUMO2) cross-link involves residue Lys403. Residues Tyr406–Arg428 form a C2H2-type 1; degenerate zinc finger. C2H2-type zinc fingers lie at residues His435–His457 and Tyr463–His485. Residues Pro488 to Leu513 are disordered. Lys496 participates in a covalent cross-link: Glycyl lysine isopeptide (Lys-Gly) (interchain with G-Cter in SUMO2). 2 consecutive C2H2-type zinc fingers follow at residues Phe522 to His545 and Phe553 to His575.

The protein belongs to the krueppel C2H2-type zinc-finger protein family. Interacts (via zinc-fingers) with JARID2. Interacts with NSD1.

It localises to the nucleus. In terms of biological role, DNA-binding transcription factor that can both act as an activator and a repressor. This chain is Zinc finger protein 496 (ZNF496), found in Homo sapiens (Human).